The primary structure comprises 5634 residues: Hemicentin-1 (5634 aa).

An N-terminal signal peptide occupies residues 1–21; it reads MIAQEVVHTVFLVALFRSSLA. One can recognise a VWFA domain in the interval 41-216; that stretch reads TLAFVFDVTG…EVLKWVEEAV (176 aa). Ig-like C2-type domains lie at 431–517, 520–607, 612–697, 702–788, 793–883, 890–976, 981–1067, 1072–1166, 1171–1254, 1261–1353, 1357–1446, 1451–1540, 1545–1633, 1638–1723, 1732–1820, 1825–1913, 1918–2006, 2011–2096, 2103–2189, 2194–2284, 2289–2378, 2383–2472, 2477–2565, 2570–2661, 2665–2762, 2765–2863, 2867–2958, 2962–3050, and 3055–3145; these read PKVT…FDVS, PPII…VFLT, PKVT…STLR, PKLV…LTLD, PVFI…TTVT, PLIG…TSVA, PSIQ…VQLT, PRVF…VKLS, PKIQ…AEVT, PSVE…YNLK, PPVI…FSVN, PSIL…IKLT, PSIK…FHVD, PTIE…REIK, PAVE…FEVT, PTIK…TQLH, PSLD…YSLQ, PSIS…RDID, PNIM…YNVN, PSIY…YNLQ, PSIT…YDLS, PSII…FGLS, PHIV…FRLN, PTIA…YEVK, PPII…VNIQ, PSFQ…YDVH, PPVI…FNLN, PPSV…VSLT, and PSIK…FHLN. Cystine bridges form between cysteine 451–cysteine 499 and cysteine 541–cysteine 591. The O-linked (GalNAc...) threonine glycan is linked to threonine 615. Intrachain disulfides connect cysteine 633-cysteine 681, cysteine 723-cysteine 772, cysteine 814-cysteine 867, cysteine 911-cysteine 960, cysteine 1002-cysteine 1051, cysteine 1101-cysteine 1150, cysteine 1192-cysteine 1240, cysteine 1287-cysteine 1337, cysteine 1381-cysteine 1430, cysteine 1474-cysteine 1524, and cysteine 1568-cysteine 1617. Threonine 1292 and threonine 1386 each carry an O-linked (GalNAc...) threonine glycan. Residue threonine 1639 is glycosylated (O-linked (GalNAc...) threonine). 2 disulfide bridges follow: cysteine 1662–cysteine 1711 and cysteine 1755–cysteine 1804. Residue threonine 1826 is glycosylated (O-linked (GalNAc...) threonine). 14 disulfide bridges follow: cysteine 1847/cysteine 1897, cysteine 1941/cysteine 1990, cysteine 2032/cysteine 2082, cysteine 2124/cysteine 2173, cysteine 2217/cysteine 2268, cysteine 2313/cysteine 2362, cysteine 2407/cysteine 2456, cysteine 2500/cysteine 2549, cysteine 2596/cysteine 2645, cysteine 2695/cysteine 2744, cysteine 2798/cysteine 2847, cysteine 2893/cysteine 2942, cysteine 2985/cysteine 3034, and cysteine 3080/cysteine 3129. Threonine 3151 carries an O-linked (GalNAc...) threonine glycan. Ig-like C2-type domains are found at residues 3155–3227, 3244–3334, 3339–3428, 3433–3515, 3526–3614, 3619–3707, 3712–3798, 3803–3891, 3896–3982, 3987–4073, 4077–4163, 4168–4252, 4259–4332, 4347–4434, and 4439–4526; these read PETE…VASN, PSVA…FNLN, PKIR…YSLQ, PNMD…GEVS, PHIN…YLVR, PNIA…FNLT, PSIG…IDLQ, PSIA…VDLT, PTIA…VTLR, PVIQ…VKLN, PPVI…STLT, PRIQ…RIVT, PTFT…AENS, PPVF…MSLT, and PIIT…VIVQ. Disulfide bonds link cysteine 3172–cysteine 3223, cysteine 3267–cysteine 3318, cysteine 3363–cysteine 3412, cysteine 3456–cysteine 3505, cysteine 3549–cysteine 3598, cysteine 3642–cysteine 3691, cysteine 3733–cysteine 3782, and cysteine 3824–cysteine 3875. Threonine 3897 carries an O-linked (GalNAc...) threonine glycan. Disulfide bonds link cysteine 3917/cysteine 3966, cysteine 4008/cysteine 4057, cysteine 4099/cysteine 4147, cysteine 4189/cysteine 4238, cysteine 4280/cysteine 4327, cysteine 4370/cysteine 4418, cysteine 4460/cysteine 4508, cysteine 4540/cysteine 4577, cysteine 4544/cysteine 4582, cysteine 4555/cysteine 4567, cysteine 4597/cysteine 4634, cysteine 4601/cysteine 4639, cysteine 4612/cysteine 4624, cysteine 4654/cysteine 4691, cysteine 4658/cysteine 4696, cysteine 4669/cysteine 4681, cysteine 4711/cysteine 4748, cysteine 4715/cysteine 4753, cysteine 4726/cysteine 4738, cysteine 4768/cysteine 4805, cysteine 4772/cysteine 4810, cysteine 4783/cysteine 4795, cysteine 4825/cysteine 4862, cysteine 4829/cysteine 4867, and cysteine 4840/cysteine 4852. O-linked (GalNAc...) threonine glycosylation occurs at threonine 4379. TSP type-1 domains follow at residues 4528–4583, 4585–4640, 4642–4697, 4699–4754, 4756–4811, and 4813–4868; these read HGGF…KLCP, DGHW…RPCP, HGVW…RHCP, DGRW…DPCP, HGNW…DMCP, and DGSW…QACP. Positions 4870–5092 constitute a Nidogen G2 beta-barrel domain; the sequence is GPQRARGSVI…SKGDRSNQCP (223 aa). The region spanning 5106–5145 is the EGF-like 1; calcium-binding domain; that stretch reads DEDECTAGNPCSHTCHNAIGAYYCSCPKGLTIAADGRTCQ. Disulfide bonds link cysteine 5110/cysteine 5120, cysteine 5116/cysteine 5129, and cysteine 5131/cysteine 5144. One can recognise an EGF-like 2; calcium-binding domain in the interval 5146-5189; sequence DIDECALGGHTCRAGQDCDNTIGSYRCVVHCGTGFRRTSDGLSC. Residues 5191 to 5228 form the EGF-like 3; calcium-binding domain; it reads DINECQESSPCHQRCFNVIGSFHCGCEAGYQLKGRKCI. 3 cysteine pairs are disulfide-bonded: cysteine 5195-cysteine 5205, cysteine 5201-cysteine 5214, and cysteine 5216-cysteine 5227. The EGF-like 4; calcium-binding domain occupies 5229–5269; sequence DVNECRQNVCRPDQHCKNTRGGYKCIDLCPSGMTKAENGTC. One can recognise an EGF-like 5; calcium-binding domain in the interval 5271–5306; sequence DIDECKDGTHQCRYNQICENTRGSYRCACPRGYRSQ. 8 disulfides stabilise this stretch: cysteine 5275-cysteine 5288, cysteine 5282-cysteine 5297, cysteine 5318-cysteine 5329, cysteine 5325-cysteine 5338, cysteine 5340-cysteine 5353, cysteine 5435-cysteine 5445, cysteine 5441-cysteine 5454, and cysteine 5456-cysteine 5469. The EGF-like 6; calcium-binding domain occupies 5314–5354; it reads DINECEQVPKPCAHQCSNSPGSFKCICLPGQQLLGDGKSCA. In terms of domain architecture, EGF-like 7; calcium-binding spans 5431-5470; it reads DIDECQNRDTCQHECKNTIGSYQCVCPPGYRLMLNGKTCQ.

In the kidney, expressed in the glomerulus (at protein level). Expressed in whisker and hair follicles, eye, tongue, and splenic and lymph node conduits (at protein level). In the embryo, localizes to the cleavage furrow at the two-cell stage (at protein level). In neonatal skin, expressed throughout the dermis (at protein level). In adult skin, strongly concentrated at the dermal side of the basement membrane but not detectable in the deeper dermis. Shows tendon-specific localization at the myotendinous junction and is also detected in the perichondrium (at protein level). Expressed by chondrocytes residing in articular cartilage and the femoral growth plate of 52 week old mice (at protein level). Expressed in vascular endothelial cells in coronary arteries and sparsely in endocardial endothelium (at protein level). Expressed in skin, tongue, lung and eye. At 14.5 dpc, expressed in the vibrissae, dermis, forelimb, kidney, intestine, lung and iliac cartilage where expression is found mainly in mesenchymal cells.

It is found in the secreted. Its subcellular location is the extracellular space. It localises to the extracellular matrix. The protein localises to the basement membrane. The protein resides in the cytoplasm. It is found in the cell junction. Its subcellular location is the cleavage furrow. Functionally, involved in transforming growth factor beta-mediated rearrangement of the podocyte cytoskeleton which includes reduction of F-actin fibers and broadening, flattening and elongation of podocytes. Plays a role in basement membrane organization. May promote cleavage furrow maturation during cytokinesis in preimplantation embryos. May play a role in the architecture of adhesive and flexible epithelial cell junctions. May play a role during myocardial remodeling by imparting an effect on cardiac fibroblast migration. This chain is Hemicentin-1, found in Mus musculus (Mouse).